A 216-amino-acid polypeptide reads, in one-letter code: Peptide methionine sulfoxide reductase MsrA (216 aa).

Cys-54 is an active-site residue.

This sequence belongs to the MsrA Met sulfoxide reductase family.

The enzyme catalyses L-methionyl-[protein] + [thioredoxin]-disulfide + H2O = L-methionyl-(S)-S-oxide-[protein] + [thioredoxin]-dithiol. It carries out the reaction [thioredoxin]-disulfide + L-methionine + H2O = L-methionine (S)-S-oxide + [thioredoxin]-dithiol. Its function is as follows. Has an important function as a repair enzyme for proteins that have been inactivated by oxidation. Catalyzes the reversible oxidation-reduction of methionine sulfoxide in proteins to methionine. In Xanthomonas euvesicatoria pv. vesicatoria (strain 85-10) (Xanthomonas campestris pv. vesicatoria), this protein is Peptide methionine sulfoxide reductase MsrA.